We begin with the raw amino-acid sequence, 212 residues long: Dihydrophenazinedicarboxylate synthase (212 aa).

Residue serine 8 participates in substrate binding. FMN contacts are provided by residues arginine 63–alanine 66 and cysteine 78–threonine 79. Residue histidine 80 coordinates substrate. FMN is bound by residues arginine 84–lysine 85 and glutamine 107. Residues arginine 129 and serine 137 each coordinate substrate. FMN contacts are provided by residues glutamine 142–serine 143 and arginine 195.

The protein belongs to the pyridoxamine 5'-phosphate oxidase family. It depends on FMN as a cofactor.

The enzyme catalyses (1R,6R)-1,4,5,5a,6,9-hexahydrophenazine-1,6-dicarboxylate + O2 = (1R,10aS)-1,4,10,10a-tetrahydrophenazine-1,6-dicarboxylate + H2O2. It carries out the reaction (1R,10aS)-1,4,10,10a-tetrahydrophenazine-1,6-dicarboxylate + O2 = (5aS)-5,5a-dihydrophenazine-1,6-dicarboxylate + H2O2. The catalysed reaction is (1R,10aS)-1,4,10,10a-tetrahydrophenazine-1-carboxylate + O2 = (10aS)-10,10a-dihydrophenazine-1-carboxylate + H2O2. It catalyses the reaction (1R)-1,4,5,10-tetrahydrophenazine-1-carboxylate + O2 = (10aS)-10,10a-dihydrophenazine-1-carboxylate + H2O2. Its pathway is antibiotic biosynthesis; phenazine biosynthesis. In terms of biological role, involved in the biosynthesis of the antibiotic phenazine, a nitrogen-containing heterocyclic molecule having important roles in virulence, competition and biological control. Catalyzes several oxidations in the terminal steps of core phenazine biosynthesis. It oxidizes both hexahydrophenazine-1,6-dicarboxylic acid (HHPDC) and tetrahydrophenazine-1-carboxylic acid (THPCA) and thereby contributes to the generation of both phenazine-1,6-dicarboxylic acid (PDC) and phenazine-1-carboxylic acid (PCA). It synthesizes phenazines in their reduced form, which are the likely end products in vivo. The polypeptide is Dihydrophenazinedicarboxylate synthase (Burkholderia lata (strain ATCC 17760 / DSM 23089 / LMG 22485 / NCIMB 9086 / R18194 / 383)).